The primary structure comprises 388 residues: Alanine racemase (388 aa).

Lys-40 (proton acceptor; specific for D-alanine) is an active-site residue. An N6-(pyridoxal phosphate)lysine modification is found at Lys-40. Residue Arg-137 coordinates substrate. The Proton acceptor; specific for L-alanine role is filled by Tyr-269. Met-318 serves as a coordination point for substrate.

It belongs to the alanine racemase family. It depends on pyridoxal 5'-phosphate as a cofactor.

The catalysed reaction is L-alanine = D-alanine. The protein operates within amino-acid biosynthesis; D-alanine biosynthesis; D-alanine from L-alanine: step 1/1. In terms of biological role, catalyzes the interconversion of L-alanine and D-alanine. May also act on other amino acids. This is Alanine racemase (alr) from Halalkalibacterium halodurans (strain ATCC BAA-125 / DSM 18197 / FERM 7344 / JCM 9153 / C-125) (Bacillus halodurans).